The following is a 421-amino-acid chain: G/T mismatch-specific thymine DNA glycosylase (421 aa).

Residues 45–108 (PNMATVTEQQ…STKSKEKQEK (64 aa)) form a disordered region. A compositionally biased stretch (basic and acidic residues) spans 77–89 (RAAEPQEPVEPKK). Over residues 91–100 (ATSKKSGKST) the composition is skewed to basic residues. Residues Lys114 and Lys259 each participate in a glycyl lysine isopeptide (Lys-Gly) (interchain with G-Cter in SUMO2) cross-link. A Glycyl lysine isopeptide (Lys-Gly) (interchain with G-Cter in SUMO); alternate cross-link involves residue Lys341. Lys341 is covalently cross-linked (Glycyl lysine isopeptide (Lys-Gly) (interchain with G-Cter in SUMO2); alternate).

This sequence belongs to the uracil-DNA glycosylase (UDG) superfamily. TDG/mug family. In terms of assembly, homodimer. Interacts with AICDA and GADD45A. Post-translationally, sumoylation on Lys-341 by either SUMO1 or SUMO2 induces dissociation of the product DNA.

The protein localises to the nucleus. The catalysed reaction is Hydrolyzes mismatched double-stranded DNA and polynucleotides, releasing free thymine.. In terms of biological role, DNA glycosylase that plays a key role in active DNA demethylation: specifically recognizes and binds 5-formylcytosine (5fC) and 5-carboxylcytosine (5caC) in the context of CpG sites and mediates their excision through base-excision repair (BER) to install an unmethylated cytosine. Cannot remove 5-hydroxymethylcytosine (5hmC). According to an alternative model, involved in DNA demethylation by mediating DNA glycolase activity toward 5-hydroxymethyluracil (5hmU) produced by deamination of 5hmC. Also involved in DNA repair by acting as a thymine-DNA glycosylase that mediates correction of G/T mispairs to G/C pairs: in the DNA of higher eukaryotes, hydrolytic deamination of 5-methylcytosine to thymine leads to the formation of G/T mismatches. Its role in the repair of canonical base damage is however minor compared to its role in DNA demethylation. It is capable of hydrolyzing the carbon-nitrogen bond between the sugar-phosphate backbone of the DNA and a mispaired thymine. In addition to the G/T, it can remove thymine also from C/T and T/T mispairs in the order G/T &gt;&gt; C/T &gt; T/T. It has no detectable activity on apyrimidinic sites and does not catalyze the removal of thymine from A/T pairs or from single-stranded DNA. It can also remove uracil and 5-bromouracil from mispairs with guanine. This chain is G/T mismatch-specific thymine DNA glycosylase (Tdg), found in Mus musculus (Mouse).